The following is a 200-amino-acid chain: dTTP/UTP pyrophosphatase (200 aa).

The Proton acceptor role is filled by aspartate 76.

This sequence belongs to the Maf family. YhdE subfamily. A divalent metal cation is required as a cofactor.

Its subcellular location is the cytoplasm. It carries out the reaction dTTP + H2O = dTMP + diphosphate + H(+). The catalysed reaction is UTP + H2O = UMP + diphosphate + H(+). Its function is as follows. Nucleoside triphosphate pyrophosphatase that hydrolyzes dTTP and UTP. May have a dual role in cell division arrest and in preventing the incorporation of modified nucleotides into cellular nucleic acids. The protein is dTTP/UTP pyrophosphatase of Acetivibrio thermocellus (strain ATCC 27405 / DSM 1237 / JCM 9322 / NBRC 103400 / NCIMB 10682 / NRRL B-4536 / VPI 7372) (Clostridium thermocellum).